Reading from the N-terminus, the 386-residue chain is Protein DOM34 (386 aa).

It belongs to the eukaryotic release factor 1 family. Pelota subfamily. As to quaternary structure, monomer. Component of the Dom34-Hbs1 complex, also named Pelota-HBS1L complex, composed of DOM34 and HBS1. A divalent metal cation serves as cofactor.

It is found in the cytoplasm. Its function is as follows. Component of the Dom34-Hbs1 complex, a complex that recognizes stalled ribosomes and triggers the No-Go Decay (NGD) pathway. In the Dom34-Hbs1 complex, DOM34 recognizes ribosomes stalled at the 3' end of an mRNA and engages stalled ribosomes by destabilizing mRNA in the mRNA channel. Following ribosome-binding, the Dom34-Hbs1 complex promotes the disassembly of stalled ribosomes, followed by degradation of damaged mRNAs as part of the NGD pathway. The Dom34-Hbs1 complex is also involved in non-functional rRNA decay. The polypeptide is Protein DOM34 (Saccharomyces cerevisiae (strain ATCC 204508 / S288c) (Baker's yeast)).